The primary structure comprises 200 residues: MARCKS-related protein (200 aa).

A disordered region spans residues 1-200; it reads MGSQSSKAPR…PTPASAEQNE (200 aa). Glycine 2 carries the N-myristoyl glycine lipid modification. Residue threonine 14 is modified to Phosphothreonine. Residues 16 to 26 are compositionally biased toward low complexity; the sequence is EEAAGASPAKA. Phosphoserine occurs at positions 22, 36, and 48. A compositionally biased stretch (low complexity) spans 53-64; that stretch reads GTDEAAGATGDA. At serine 71 the chain carries Phosphoserine. Over residues 74–85 the composition is skewed to basic and acidic residues; the sequence is AEAKGEVAPKET. Position 85 is a phosphothreonine (threonine 85). Positions 86-98 are enriched in basic residues; sequence PKKKKKFSFKKPF. The tract at residues 87–110 is effector domain involved in lipid-binding and calmodulin-binding; sequence KKKKKFSFKKPFKLSGLSFKRNRK. A phosphoserine; by PKC mark is found at serine 93, serine 101, and serine 104. Serine 119 carries the post-translational modification Phosphoserine. At serine 120 the chain carries Phosphoserine; by MAPK8. Phosphoserine is present on residues serine 132 and serine 135. At threonine 148 the chain carries Phosphothreonine; by MAPK8. Phosphoserine occurs at positions 151, 162, and 165. Residues 156-165 show a composition bias toward low complexity; the sequence is AKGAEASAAS. Phosphothreonine is present on threonine 170. Residues 178–200 are compositionally biased toward low complexity; sequence AAEPSTPSGPESGPTPASAEQNE. A Phosphothreonine; by MAPK8 modification is found at threonine 183. A Phosphothreonine modification is found at threonine 192.

It belongs to the MARCKS family. In terms of assembly, binds to filamentous actin (F-actin), but not to monomeric G-actin, independently of its phosphorylation status. Interacts with calmodulin. Post-translationally, phosphorylated. Phosphorylation at Ser-120 and Thr-183 is non-redundantly catalyzed by MAPK8 in vivo. Phosphorylation at Thr-148 is preferentially catalyzed by MAPK8 in vivo, but this modification can also be catalyzed by other kinases in the absence of MAPK8. May be phosphorylated by protein kinase C, which disrupts the interaction with calmodulin. As to expression, expressed at high levels in brain cortex and hippocampus, including dentate gyrus, anterior olfactory nucleus, primary olfactory cortex, entorhinal cortex, medial preoptic area and dorsomedial hypothalamic nucleus (at protein level). Expressed in neuronal cells (at protein level). Detected in the retina. Strongly expressed in testis and uterus; expressed at lower levels in cerebellum, cerebrum, adipose tissue, spleen, kidney, thyroid, liver, lung, skeletal muscle and heart. Detected in T-cells and B-cells.

Its subcellular location is the cytoplasm. The protein resides in the cytoskeleton. The protein localises to the cell membrane. Functionally, involved in the control of cell movement by regulating actin cytoskeleton homeostasis and filopodium and lamellipodium formation. When unphosphorylated, induces cell migration. When phosphorylated by MAPK8, induces actin bundles formation and stabilization, thereby reducing actin plasticity, hence restricting cell movement, including neuronal migration. May be involved in coupling the protein kinase C and calmodulin signal transduction systems. The protein is MARCKS-related protein (Marcksl1) of Mus musculus (Mouse).